We begin with the raw amino-acid sequence, 297 residues long: Transmembrane protein 178A (297 aa).

The N-terminal stretch at 1-25 is a signal peptide; the sequence is MEPRALVTALSLGLSLCSLGLLVTA. The Extracellular segment spans residues 26–179; the sequence is IFTDHWYETD…LLHLRRITAG (154 aa). Residues 41 to 57 are compositionally biased toward basic and acidic residues; sequence ESCERSRAGADPPDQKN. The tract at residues 41–86 is disordered; the sequence is ESCERSRAGADPPDQKNRLMPLSHLPLRDSPPLGRRLLPGGPGRSD. Over residues 68–79 the composition is skewed to low complexity; that stretch reads RDSPPLGRRLLP. Asn-158 is a glycosylation site (N-linked (GlcNAc...) asparagine). Residues 180–200 traverse the membrane as a helical segment; it reads FLGMAVAVLLCGCIVATVSFF. At 201–208 the chain is on the cytoplasmic side; that stretch reads WEESLTQH. The helical transmembrane segment at 209-229 threads the bilayer; it reads VAGLLFLMTGIFCTISLCTYA. Residues 230–257 are Extracellular-facing; that stretch reads ASVSYDLNRVPKLIYSLPHDVEHGYSWS. A helical transmembrane segment spans residues 258–278; that stretch reads IFCAWCSLGFIVAAGGLCIAY. At 279 to 297 the chain is on the cytoplasmic side; it reads PFISRTKIAHLKSGRDSTV.

Belongs to the TMEM178 family. As to quaternary structure, interacts with STIM1.

Its subcellular location is the endoplasmic reticulum membrane. Its function is as follows. Acts as a negative regulator of osteoclast differentiation in basal and inflammatory conditions by regulating TNFSF11-induced Ca (2+) fluxes, thereby controlling the induction of NFATC1. The sequence is that of Transmembrane protein 178A (Tmem178a) from Rattus norvegicus (Rat).